Consider the following 1706-residue polypeptide: Probable ATP-dependent RNA helicase DDX60-like (1706 aa).

A disordered region spans residues 545–580; it reads RPKEDSSGASGEILQNTKPHQITKKSKKKSFLKEDQ. The segment covering 551 to 564 has biased composition (polar residues); it reads SGASGEILQNTKPH. Positions 565–574 are enriched in basic residues; sequence QITKKSKKKS. One can recognise a Helicase ATP-binding domain in the interval 752–919; that stretch reads LDVVDKNESA…WLQSVKQYWK (168 aa). Residue 765 to 772 participates in ATP binding; that stretch reads APTSSGKT. The DEAH box motif lies at 869–872; the sequence is DEVH. The 150-residue stretch at 1205–1354 folds into the Helicase C-terminal domain; it reads DVKALHTEIT…QFPLSITLVL (150 aa).

The protein belongs to the helicase family.

The enzyme catalyses ATP + H2O = ADP + phosphate + H(+). The polypeptide is Probable ATP-dependent RNA helicase DDX60-like (Homo sapiens (Human)).